Here is a 592-residue protein sequence, read N- to C-terminus: A-type ATP synthase subunit A (592 aa).

Position 231-238 (231-238) interacts with ATP; the sequence is GGFGTGKT.

This sequence belongs to the ATPase alpha/beta chains family. Has multiple subunits with at least A(3), B(3), C, D, E, F, H, I and proteolipid K(x).

The protein resides in the cell membrane. It carries out the reaction ATP + H2O + 4 H(+)(in) = ADP + phosphate + 5 H(+)(out). Its function is as follows. Component of the A-type ATP synthase that produces ATP from ADP in the presence of a proton gradient across the membrane. The A chain is the catalytic subunit. The sequence is that of A-type ATP synthase subunit A from Staphylothermus marinus (strain ATCC 43588 / DSM 3639 / JCM 9404 / F1).